We begin with the raw amino-acid sequence, 339 residues long: tRNA N6-adenosine threonylcarbamoyltransferase (339 aa).

Fe cation is bound by residues His-112 and His-116. Substrate-binding positions include 135-139, Asp-168, Gly-181, and Asn-273; that span reads LVSGG. Asp-301 lines the Fe cation pocket.

This sequence belongs to the KAE1 / TsaD family. The cofactor is Fe(2+).

The protein localises to the cytoplasm. The enzyme catalyses L-threonylcarbamoyladenylate + adenosine(37) in tRNA = N(6)-L-threonylcarbamoyladenosine(37) in tRNA + AMP + H(+). Functionally, required for the formation of a threonylcarbamoyl group on adenosine at position 37 (t(6)A37) in tRNAs that read codons beginning with adenine. Is involved in the transfer of the threonylcarbamoyl moiety of threonylcarbamoyl-AMP (TC-AMP) to the N6 group of A37, together with TsaE and TsaB. TsaD likely plays a direct catalytic role in this reaction. In Coxiella burnetii (strain RSA 493 / Nine Mile phase I), this protein is tRNA N6-adenosine threonylcarbamoyltransferase.